The chain runs to 167 residues: NAD(P)H-quinone oxidoreductase subunit I, chloroplastic (167 aa).

4Fe-4S ferredoxin-type domains follow at residues G55–K84 and L95–E124. The [4Fe-4S] cluster site is built by C64, C67, C70, C74, C104, C107, C110, and C114.

This sequence belongs to the complex I 23 kDa subunit family. In terms of assembly, NDH is composed of at least 16 different subunits, 5 of which are encoded in the nucleus. The cofactor is [4Fe-4S] cluster.

It localises to the plastid. The protein resides in the chloroplast thylakoid membrane. The catalysed reaction is a plastoquinone + NADH + (n+1) H(+)(in) = a plastoquinol + NAD(+) + n H(+)(out). The enzyme catalyses a plastoquinone + NADPH + (n+1) H(+)(in) = a plastoquinol + NADP(+) + n H(+)(out). Its function is as follows. NDH shuttles electrons from NAD(P)H:plastoquinone, via FMN and iron-sulfur (Fe-S) centers, to quinones in the photosynthetic chain and possibly in a chloroplast respiratory chain. The immediate electron acceptor for the enzyme in this species is believed to be plastoquinone. Couples the redox reaction to proton translocation, and thus conserves the redox energy in a proton gradient. In Morus indica (Mulberry), this protein is NAD(P)H-quinone oxidoreductase subunit I, chloroplastic.